A 218-amino-acid chain; its full sequence is Small ribosomal subunit protein uS3c (218 aa).

The KH type-2 domain maps to 47–118; it reads VRKHIKSSSN…KLRMALTEVE (72 aa).

The protein belongs to the universal ribosomal protein uS3 family. Part of the 30S ribosomal subunit.

The protein resides in the plastid. Its subcellular location is the chloroplast. The sequence is that of Small ribosomal subunit protein uS3c (rps3) from Anthoceros angustus (Hornwort).